Reading from the N-terminus, the 226-residue chain is Cytidylate kinase (226 aa).

Position 12 to 20 (12 to 20 (GPSGAGKGT)) interacts with ATP.

It belongs to the cytidylate kinase family. Type 1 subfamily.

It localises to the cytoplasm. The catalysed reaction is CMP + ATP = CDP + ADP. It catalyses the reaction dCMP + ATP = dCDP + ADP. The sequence is that of Cytidylate kinase from Colwellia psychrerythraea (strain 34H / ATCC BAA-681) (Vibrio psychroerythus).